A 488-amino-acid polypeptide reads, in one-letter code: 3-octaprenyl-4-hydroxybenzoate carboxy-lyase (488 aa).

Asparagine 172 is a binding site for Mn(2+). Residues 175 to 177 (IYR), 189 to 191 (RWL), and 194 to 195 (RG) each bind prenylated FMN. Glutamate 238 contacts Mn(2+). Residue aspartate 287 is the Proton donor of the active site.

Belongs to the UbiD family. In terms of assembly, homohexamer. Prenylated FMN serves as cofactor. Mn(2+) is required as a cofactor.

It is found in the cell membrane. It catalyses the reaction a 4-hydroxy-3-(all-trans-polyprenyl)benzoate + H(+) = a 2-(all-trans-polyprenyl)phenol + CO2. Its pathway is cofactor biosynthesis; ubiquinone biosynthesis. In terms of biological role, catalyzes the decarboxylation of 3-octaprenyl-4-hydroxy benzoate to 2-octaprenylphenol, an intermediate step in ubiquinone biosynthesis. The chain is 3-octaprenyl-4-hydroxybenzoate carboxy-lyase from Pseudomonas fluorescens (strain Pf0-1).